The following is a 457-amino-acid chain: Secreted effector kinase SteC (457 aa).

Residue Lys256 coordinates ATP.

This sequence belongs to the protein kinase superfamily. Post-translationally, autophosphorylated.

The protein resides in the secreted. Its subcellular location is the host cytoplasm. Its function is as follows. Effector proteins function to alter host cell physiology and promote bacterial survival in host tissues. This protein is a kinase, which is required for SPI-2 T3SS-dependent F-actin meshwork formation in infected host cells. The sequence is that of Secreted effector kinase SteC (steC) from Salmonella typhimurium (strain LT2 / SGSC1412 / ATCC 700720).